The primary structure comprises 391 residues: Transmembrane protein 79 (391 aa).

Residues 1 to 114 (MTEPETLALL…TKSEEPFKED (114 aa)) are disordered. The Cytoplasmic segment spans residues 1–200 (MTEPETLALL…GREALRAVAS (200 aa)). A compositionally biased stretch (basic and acidic residues) spans 103–114 (APTKSEEPFKED). Residues 201–221 (VVAALIFFPCLLYGAYAFLPF) form a helical membrane-spanning segment. Residues 222-240 (DAPRLPTMSSRLVYTLRCG) lie on the Extracellular side of the membrane. The helical transmembrane segment at 241–261 (VFATFPIVLGLLVYGLSLLCF) threads the bilayer. Residues 262–279 (SALRPFGEPRREVEIHRQ) are Cytoplasmic-facing. Residues 280 to 300 (YVAQSVQLFILYFFNLAVLST) traverse the membrane as a helical segment. At 301–309 (YLPQDTLKL) the chain is on the extracellular side. A helical transmembrane segment spans residues 310-330 (LPLLTGLFAISRLIYWLTFAV). Residues 331-339 (GRSFRGFGY) lie on the Cytoplasmic side of the membrane. A helical transmembrane segment spans residues 340–360 (GLTFLPLLAMLVWNLYYMFVV). Residues 361–391 (EPERMLTASESRLDYPDHARSVSDYRPRSWG) lie on the Extracellular side of the membrane.

Expressed in the epidermis of the skin. Expressed in epithelial cells of the outermost layer of the stratum granulosum (SG) and in hair follicles (at protein level).

It localises to the lysosome. The protein localises to the golgi apparatus. It is found in the trans-Golgi network. Its subcellular location is the membrane. In terms of biological role, contributes to the epidermal integrity and skin barrier function. Plays a role in the lamellar granule (LG) secretory system and in the stratum corneum (SC) epithelial cell formation. This chain is Transmembrane protein 79 (Tmem79), found in Mus musculus (Mouse).